The primary structure comprises 379 residues: Probable RNA 3'-terminal phosphate cyclase-like protein (379 aa).

The protein belongs to the RNA 3'-terminal cyclase family. Type 2 subfamily. As to quaternary structure, part of the small subunit (SSU) processome, composed of more than 70 proteins and the RNA chaperone small nucleolar RNA (snoRNA) U3.

The protein localises to the nucleus. Its subcellular location is the nucleolus. Part of the small subunit (SSU) processome, first precursor of the small eukaryotic ribosomal subunit. During the assembly of the SSU processome in the nucleolus, many ribosome biogenesis factors, an RNA chaperone and ribosomal proteins associate with the nascent pre-rRNA and work in concert to generate RNA folding, modifications, rearrangements and cleavage as well as targeted degradation of pre-ribosomal RNA by the RNA exosome. Does not have cyclase activity. This Caenorhabditis elegans protein is Probable RNA 3'-terminal phosphate cyclase-like protein.